The sequence spans 147 residues: SsrA-binding protein (147 aa).

The protein belongs to the SmpB family.

It is found in the cytoplasm. In terms of biological role, required for rescue of stalled ribosomes mediated by trans-translation. Binds to transfer-messenger RNA (tmRNA), required for stable association of tmRNA with ribosomes. tmRNA and SmpB together mimic tRNA shape, replacing the anticodon stem-loop with SmpB. tmRNA is encoded by the ssrA gene; the 2 termini fold to resemble tRNA(Ala) and it encodes a 'tag peptide', a short internal open reading frame. During trans-translation Ala-aminoacylated tmRNA acts like a tRNA, entering the A-site of stalled ribosomes, displacing the stalled mRNA. The ribosome then switches to translate the ORF on the tmRNA; the nascent peptide is terminated with the 'tag peptide' encoded by the tmRNA and targeted for degradation. The ribosome is freed to recommence translation, which seems to be the essential function of trans-translation. The chain is SsrA-binding protein from Mycoplasma pneumoniae (strain ATCC 29342 / M129 / Subtype 1) (Mycoplasmoides pneumoniae).